Consider the following 206-residue polypeptide: Ribosomal RNA large subunit methyltransferase E (206 aa).

S-adenosyl-L-methionine contacts are provided by Gly61, Trp63, Asp81, Asp97, and Asp122. Lys162 serves as the catalytic Proton acceptor.

This sequence belongs to the class I-like SAM-binding methyltransferase superfamily. RNA methyltransferase RlmE family.

The protein localises to the cytoplasm. The enzyme catalyses uridine(2552) in 23S rRNA + S-adenosyl-L-methionine = 2'-O-methyluridine(2552) in 23S rRNA + S-adenosyl-L-homocysteine + H(+). Specifically methylates the uridine in position 2552 of 23S rRNA at the 2'-O position of the ribose in the fully assembled 50S ribosomal subunit. This Neisseria meningitidis serogroup C (strain 053442) protein is Ribosomal RNA large subunit methyltransferase E.